A 365-amino-acid polypeptide reads, in one-letter code: MTENHYLLLTPGPLTTTKTVKEVMLYDWCTWDVEYNMMVQKVRAKLVSLATKEEEKYTTVLMQGSGTFSVEAVIGSVIPKNGKLLVCTNGAYGKRIVQMAEMLHIDVVVSQTEEWEPTNIVEVEKILQQDKEITHIAVVHCETTTGIINPIVDVCKLGKQYGKVTLVDAMSSFGGIEIDIAELEIDFLISSANKCIQGVPGFGFVIAQRDELLKCKGQARSLSLDLYDQWETMENQNGKWRFTSPTHVVHAFYQALLELEKEGGVRARYNRYYNNQKLLVNRMGEIGFKPLVNEKYQSPIITSFIYPEGNFEFQQLYNELKRYGFVIYPGKISKVDTFRIGNIGDVHEEDINRLVDSIAKGVVIG.

Lysine 194 carries the N6-(pyridoxal phosphate)lysine modification.

It belongs to the class-V pyridoxal-phosphate-dependent aminotransferase family. PhnW subfamily. In terms of assembly, homodimer. Pyridoxal 5'-phosphate is required as a cofactor.

The catalysed reaction is (2-aminoethyl)phosphonate + pyruvate = phosphonoacetaldehyde + L-alanine. Involved in phosphonate degradation. In Bacillus thuringiensis (strain Al Hakam), this protein is 2-aminoethylphosphonate--pyruvate transaminase.